The following is a 442-amino-acid chain: tRNA(Ile)-lysidine synthase (442 aa).

27–32 (SGGLDS) lines the ATP pocket.

It belongs to the tRNA(Ile)-lysidine synthase family.

The protein localises to the cytoplasm. It catalyses the reaction cytidine(34) in tRNA(Ile2) + L-lysine + ATP = lysidine(34) in tRNA(Ile2) + AMP + diphosphate + H(+). Functionally, ligates lysine onto the cytidine present at position 34 of the AUA codon-specific tRNA(Ile) that contains the anticodon CAU, in an ATP-dependent manner. Cytidine is converted to lysidine, thus changing the amino acid specificity of the tRNA from methionine to isoleucine. In Photorhabdus laumondii subsp. laumondii (strain DSM 15139 / CIP 105565 / TT01) (Photorhabdus luminescens subsp. laumondii), this protein is tRNA(Ile)-lysidine synthase.